Reading from the N-terminus, the 531-residue chain is tRNA(Ile)-lysidine synthase (531 aa).

32-37 (SGGMDS) is an ATP binding site.

Belongs to the tRNA(Ile)-lysidine synthase family.

It is found in the cytoplasm. It carries out the reaction cytidine(34) in tRNA(Ile2) + L-lysine + ATP = lysidine(34) in tRNA(Ile2) + AMP + diphosphate + H(+). Functionally, ligates lysine onto the cytidine present at position 34 of the AUA codon-specific tRNA(Ile) that contains the anticodon CAU, in an ATP-dependent manner. Cytidine is converted to lysidine, thus changing the amino acid specificity of the tRNA from methionine to isoleucine. This chain is tRNA(Ile)-lysidine synthase, found in Blochmanniella floridana.